The following is a 114-amino-acid chain: Phosphoribosyl-AMP cyclohydrolase (114 aa).

Asp-76 lines the Mg(2+) pocket. Cys-77 provides a ligand contact to Zn(2+). Positions 78 and 80 each coordinate Mg(2+). 2 residues coordinate Zn(2+): Cys-93 and Cys-100.

This sequence belongs to the PRA-CH family. In terms of assembly, homodimer. Mg(2+) is required as a cofactor. It depends on Zn(2+) as a cofactor.

The protein resides in the cytoplasm. It carries out the reaction 1-(5-phospho-beta-D-ribosyl)-5'-AMP + H2O = 1-(5-phospho-beta-D-ribosyl)-5-[(5-phospho-beta-D-ribosylamino)methylideneamino]imidazole-4-carboxamide. It functions in the pathway amino-acid biosynthesis; L-histidine biosynthesis; L-histidine from 5-phospho-alpha-D-ribose 1-diphosphate: step 3/9. Functionally, catalyzes the hydrolysis of the adenine ring of phosphoribosyl-AMP. The polypeptide is Phosphoribosyl-AMP cyclohydrolase (Streptococcus sanguinis (strain SK36)).